Here is a 305-residue protein sequence, read N- to C-terminus: Protoheme IX farnesyltransferase (305 aa).

The next 9 membrane-spanning stretches (helical) occupy residues 31–51 (VMSL…YSVH), 52–72 (PFIA…AGAI), 96–118 (VIES…FFMA), 122–144 (NLLA…TIWL), 151–171 (NIVI…AAVS), 180–200 (ILFL…ALFC), 225–245 (ILIY…IGMN), 247–267 (FIYL…AGSL), and 281–301 (FAYS…TNTI).

Belongs to the UbiA prenyltransferase family. Protoheme IX farnesyltransferase subfamily.

The protein resides in the cell inner membrane. It carries out the reaction heme b + (2E,6E)-farnesyl diphosphate + H2O = Fe(II)-heme o + diphosphate. Its pathway is porphyrin-containing compound metabolism; heme O biosynthesis; heme O from protoheme: step 1/1. In terms of biological role, converts heme B (protoheme IX) to heme O by substitution of the vinyl group on carbon 2 of heme B porphyrin ring with a hydroxyethyl farnesyl side group. In Rickettsia peacockii (strain Rustic), this protein is Protoheme IX farnesyltransferase.